Here is a 360-residue protein sequence, read N- to C-terminus: Leukotriene B4 receptor 2 (360 aa).

Residues 1 to 24 lie on the Extracellular side of the membrane; sequence MSVCYRPPGNETLLSWKGSRATGT. The N-linked (GlcNAc...) asparagine glycan is linked to Asn10. A helical transmembrane segment spans residues 25-45; it reads AFLLLAALLGLPGNGFVVWSL. At 46-60 the chain is on the cytoplasmic side; that stretch reads AGWRPTAGRPLAATL. Residues 61–81 traverse the membrane as a helical segment; the sequence is VLHLALADGAVLLLTPLFVAF. The Extracellular portion of the chain corresponds to 82–96; sequence LSQEAWPLGQVGCKA. A helical membrane pass occupies residues 97-117; sequence VYYVCALSMYASVLLTGLLSL. At 118 to 140 the chain is on the cytoplasmic side; it reads QRCLAVTRPFLAPRLRSPALARR. The helical transmembrane segment at 141-161 threads the bilayer; the sequence is LLLGVWLAALVLAVPAAVYRH. The Extracellular portion of the chain corresponds to 162–185; sequence LWGGRVCQLCHPSPVHAAAHLSLE. A helical transmembrane segment spans residues 186-206; the sequence is TLTAFVLPFGTVLGCYGVTLA. The Cytoplasmic portion of the chain corresponds to 207 to 224; sequence RLRGARWGSGRQGTRVGR. Residues 225-245 form a helical membrane-spanning segment; it reads LVSAIVLAFGLLWAPYHAVNL. Topologically, residues 246–275 are extracellular; that stretch reads LQAVAALAPPEGPLARLGGAGQAARAGTTA. Residues 276–296 form a helical membrane-spanning segment; the sequence is LAFFSSSVNPVLYVFTAGDLL. Residues 297 to 360 lie on the Cytoplasmic side of the membrane; that stretch reads PRAGPRFLTR…GKTEKDSQEW (64 aa). The tract at residues 311-360 is disordered; sequence SGEARGGSRSREGTMELRTTPKLKVMGQGRGNGDPGGGDGGKTEKDSQEW. Over residues 338-350 the composition is skewed to gly residues; sequence QGRGNGDPGGGDG. A compositionally biased stretch (basic and acidic residues) spans 351 to 360; it reads GKTEKDSQEW.

Belongs to the G-protein coupled receptor 1 family.

The protein resides in the cell membrane. In terms of biological role, low-affinity receptor for leukotrienes including leukotriene B4. Mediates chemotaxis of granulocytes and macrophages. The response is mediated via G-proteins that activate a phosphatidylinositol-calcium second messenger system. This chain is Leukotriene B4 receptor 2 (Ltb4r2), found in Mus musculus (Mouse).